Reading from the N-terminus, the 335-residue chain is DNA-directed RNA polymerase subunit alpha (335 aa).

The alpha N-terminal domain (alpha-NTD) stretch occupies residues 1–233 (MQRNWRELIK…DQLTIFINFE (233 aa)). The tract at residues 249–335 (FNDHLFRSVD…DIENRRKEQE (87 aa)) is alpha C-terminal domain (alpha-CTD).

This sequence belongs to the RNA polymerase alpha chain family. Homodimer. The RNAP catalytic core consists of 2 alpha, 1 beta, 1 beta' and 1 omega subunit. When a sigma factor is associated with the core the holoenzyme is formed, which can initiate transcription.

It carries out the reaction RNA(n) + a ribonucleoside 5'-triphosphate = RNA(n+1) + diphosphate. DNA-dependent RNA polymerase catalyzes the transcription of DNA into RNA using the four ribonucleoside triphosphates as substrates. The polypeptide is DNA-directed RNA polymerase subunit alpha (Syntrophobacter fumaroxidans (strain DSM 10017 / MPOB)).